Consider the following 411-residue polypeptide: Serine hydroxymethyltransferase (411 aa).

Residues L119 and 123 to 125 (GHL) contribute to the (6S)-5,6,7,8-tetrahydrofolate site. The residue at position 228 (K228) is an N6-(pyridoxal phosphate)lysine. 351-353 (SPF) contacts (6S)-5,6,7,8-tetrahydrofolate.

The protein belongs to the SHMT family. As to quaternary structure, homodimer. Pyridoxal 5'-phosphate is required as a cofactor.

It localises to the cytoplasm. It catalyses the reaction (6R)-5,10-methylene-5,6,7,8-tetrahydrofolate + glycine + H2O = (6S)-5,6,7,8-tetrahydrofolate + L-serine. Its pathway is one-carbon metabolism; tetrahydrofolate interconversion. It participates in amino-acid biosynthesis; glycine biosynthesis; glycine from L-serine: step 1/1. In terms of biological role, catalyzes the reversible interconversion of serine and glycine with tetrahydrofolate (THF) serving as the one-carbon carrier. This reaction serves as the major source of one-carbon groups required for the biosynthesis of purines, thymidylate, methionine, and other important biomolecules. Also exhibits THF-independent aldolase activity toward beta-hydroxyamino acids, producing glycine and aldehydes, via a retro-aldol mechanism. The chain is Serine hydroxymethyltransferase from Clostridium botulinum (strain Eklund 17B / Type B).